A 129-amino-acid chain; its full sequence is Transcription antitermination protein NusB (129 aa).

The protein belongs to the NusB family.

Its function is as follows. Involved in transcription antitermination. Required for transcription of ribosomal RNA (rRNA) genes. Binds specifically to the boxA antiterminator sequence of the ribosomal RNA (rrn) operons. The protein is Transcription antitermination protein NusB of Staphylococcus aureus (strain USA300 / TCH1516).